A 451-amino-acid chain; its full sequence is Transcription factor TGAL8 (451 aa).

Residues 1 to 22 show a composition bias toward polar residues; that stretch reads MAYPSTSGMIQASSSLHGSITR. 2 disordered regions span residues 1-32 and 70-151; these read MAYPSTSGMIQASSSLHGSITRRNPEGYDMPS and FPSQ…PKTL. A compositionally biased stretch (basic and acidic residues) spans 141–150; sequence KGPKTPDPKT. The 45-residue stretch at 147–191 folds into the bZIP domain; that stretch reads DPKTLRRLAQNREAARKSRLRKKAYIQQLETGRIRLAHLEQEIQF. The tract at residues 149 to 169 is basic motif; the sequence is KTLRRLAQNREAARKSRLRKK. Positions 175-189 are leucine-zipper; that stretch reads LETGRIRLAHLEQEI. Residues 208 to 444 form the DOG1 domain; the sequence is AALFNLEYER…RALALFWTTT (237 aa).

It belongs to the bZIP family. Interacts with NPR5/NH4, NH5.1 and NH5.2.

Its subcellular location is the nucleus. In terms of biological role, transcriptional regulator involved in defense response. In Oryza sativa subsp. japonica (Rice), this protein is Transcription factor TGAL8.